The sequence spans 295 residues: Porphobilinogen deaminase (295 aa).

An S-(dipyrrolylmethanemethyl)cysteine modification is found at Cys-241.

Belongs to the HMBS family. Monomer. The cofactor is dipyrromethane.

It catalyses the reaction 4 porphobilinogen + H2O = hydroxymethylbilane + 4 NH4(+). It participates in porphyrin-containing compound metabolism; protoporphyrin-IX biosynthesis; coproporphyrinogen-III from 5-aminolevulinate: step 2/4. Tetrapolymerization of the monopyrrole PBG into the hydroxymethylbilane pre-uroporphyrinogen in several discrete steps. The chain is Porphobilinogen deaminase from Lachnospira eligens (strain ATCC 27750 / DSM 3376 / VPI C15-48 / C15-B4) (Eubacterium eligens).